The primary structure comprises 149 residues: SsrA-binding protein (149 aa).

Belongs to the SmpB family.

The protein localises to the cytoplasm. Required for rescue of stalled ribosomes mediated by trans-translation. Binds to transfer-messenger RNA (tmRNA), required for stable association of tmRNA with ribosomes. tmRNA and SmpB together mimic tRNA shape, replacing the anticodon stem-loop with SmpB. tmRNA is encoded by the ssrA gene; the 2 termini fold to resemble tRNA(Ala) and it encodes a 'tag peptide', a short internal open reading frame. During trans-translation Ala-aminoacylated tmRNA acts like a tRNA, entering the A-site of stalled ribosomes, displacing the stalled mRNA. The ribosome then switches to translate the ORF on the tmRNA; the nascent peptide is terminated with the 'tag peptide' encoded by the tmRNA and targeted for degradation. The ribosome is freed to recommence translation, which seems to be the essential function of trans-translation. In Mesoplasma florum (strain ATCC 33453 / NBRC 100688 / NCTC 11704 / L1) (Acholeplasma florum), this protein is SsrA-binding protein.